Consider the following 314-residue polypeptide: Peroxidase 2 (314 aa).

The N-terminal stretch at 1 to 23 (MASASSVSLMLLVAAAMASAASA) is a signal peptide. Q24 bears the Pyrrolidone carboxylic acid mark. Disulfide bonds link C34/C109, C67/C72, C115/C310, and C194/C219. Residue H65 is the Proton acceptor of the active site. Ca(2+) is bound by residues D66, V69, G71, D73, and S75. Residue N148 is glycosylated (N-linked (GlcNAc...) asparagine). P157 serves as a coordination point for substrate. Residue N169 is glycosylated (N-linked (GlcNAc...) asparagine). H187 serves as a coordination point for heme b. Ca(2+) is bound at residue T188. A glycan (N-linked (GlcNAc...) asparagine) is linked at N203. The Ca(2+) site is built by D234, T237, and D242. Residues N274 and N309 are each glycosylated (N-linked (GlcNAc...) asparagine).

It belongs to the peroxidase family. Classical plant (class III) peroxidase subfamily. The cofactor is Ca(2+). Requires heme b as cofactor.

The protein localises to the secreted. The enzyme catalyses 2 a phenolic donor + H2O2 = 2 a phenolic radical donor + 2 H2O. Functionally, removal of H(2)O(2), oxidation of toxic reductants, biosynthesis and degradation of lignin, suberization, auxin catabolism, response to environmental stresses such as wounding, pathogen attack and oxidative stress. These functions might be dependent on each isozyme/isoform in each plant tissue. The polypeptide is Peroxidase 2 (PRX112) (Oryza sativa subsp. japonica (Rice)).